We begin with the raw amino-acid sequence, 574 residues long: Golgin subfamily A member 6-like protein 4 (574 aa).

The segment covering 1–11 has biased composition (pro residues); the sequence is MWPQPRFPPHP. Disordered stretches follow at residues 1–77 and 491–552; these read MWPQ…YGEG and KELK…AAGG. Residues 51 to 62 show a composition bias toward polar residues; that stretch reads NGSSPDTATSGG. Residues 157-496 are a coiled coil; the sequence is SKVEQLQDET…EQQVKELKKS (340 aa). A compositionally biased stretch (basic and acidic residues) spans 491–504; that stretch reads KELKKSGGAEEPRG. The span at 508–523 shows a compositional bias: low complexity; it reads AAAARPVAGAPVPQGA.

The protein belongs to the GOLGA6 family.

In Homo sapiens (Human), this protein is Golgin subfamily A member 6-like protein 4 (GOLGA6L4).